The chain runs to 612 residues: GPI mannosyltransferase 3 (612 aa).

2 consecutive transmembrane segments (helical) span residues Leu-92–Met-112 and Val-145–Ile-165. Asn-188 carries N-linked (GlcNAc...) asparagine glycosylation. The next 3 helical transmembrane spans lie at Ile-192 to Ile-212, Arg-254 to Leu-274, and Ile-288 to Asn-308. The N-linked (GlcNAc...) asparagine glycan is linked to Asn-321. Residues Leu-339–Phe-359 form a helical membrane-spanning segment. Asn-361 carries N-linked (GlcNAc...) asparagine glycosylation. Helical transmembrane passes span Phe-371 to Leu-391, Phe-398 to Ala-418, and Glu-429 to Gln-449. 3 N-linked (GlcNAc...) asparagine glycosylation sites follow: Asn-508, Asn-526, and Asn-550.

This sequence belongs to the glycosyltransferase 22 family. PIGB subfamily.

Its subcellular location is the endoplasmic reticulum membrane. The protein operates within glycolipid biosynthesis; glycosylphosphatidylinositol-anchor biosynthesis. In terms of biological role, mannosyltransferase involved in glycosylphosphatidylinositol-anchor biosynthesis. Transfers the third mannose to Man2-GlcN-acyl-PI during GPI precursor assembly. The sequence is that of GPI mannosyltransferase 3 (GPI10) from Candida glabrata (strain ATCC 2001 / BCRC 20586 / JCM 3761 / NBRC 0622 / NRRL Y-65 / CBS 138) (Yeast).